We begin with the raw amino-acid sequence, 240 residues long: Pathogenesis-related thaumatin-like protein 3.5 (240 aa).

A signal peptide spans 1 to 20 (MASLRLATLAMMVLFGSCRA). Cystine bridges form between Cys-31-Cys-237, Cys-79-Cys-89, Cys-94-Cys-100, Cys-145-Cys-227, Cys-150-Cys-210, Cys-158-Cys-173, Cys-177-Cys-186, and Cys-187-Cys-197.

Belongs to the thaumatin family. In terms of tissue distribution, strongly expressed in pollen grains. Also present at weak levels in seedling roots, in sapling stems and in developing male strobili.

In terms of biological role, may be involved in disease resistance. The chain is Pathogenesis-related thaumatin-like protein 3.5 from Cryptomeria japonica (Japanese cedar).